Consider the following 1005-residue polypeptide: Negative regulator of pleiotropic drug resistance STB5 (1005 aa).

The segment at 1–28 is disordered; sequence MSGPDKGSDSGQTANDPKQKKARNGQME. A DNA-binding region (zn(2)-C6 fungal-type) is located at residues 32-59; the sequence is CARCRKLKKKCPRQLPECSNCLKAREPC. Disordered regions lie at residues 129 to 151, 666 to 693, and 763 to 831; these read GGEQ…SINR, KGKS…EDVK, and TKPT…SSLR. The span at 673-693 shows a compositional bias: basic and acidic residues; that stretch reads KRFEKSKESDSDRGVTEEDVK. Residues 763–773 show a composition bias toward polar residues; it reads TKPTANIMNDQ. The span at 792 to 801 shows a compositional bias: basic and acidic residues; it reads EGPKSLKEGN.

Its subcellular location is the nucleus. Its function is as follows. Transcription factor that negatively regulates pleiotropic drug resistance genes, including the ABC transporter genes CDR1, PDH1, and YOR1. The sequence is that of Negative regulator of pleiotropic drug resistance STB5 from Candida glabrata (strain ATCC 2001 / BCRC 20586 / JCM 3761 / NBRC 0622 / NRRL Y-65 / CBS 138) (Yeast).